Here is a 47-residue protein sequence, read N- to C-terminus: Protein YqhI (47 aa).

The chain is Protein YqhI from Escherichia coli (strain K12).